Consider the following 128-residue polypeptide: Sulfurtransferase TusD (128 aa).

Catalysis depends on C78, which acts as the Cysteine persulfide intermediate.

It belongs to the DsrE/TusD family. In terms of assembly, heterohexamer, formed by a dimer of trimers. The hexameric TusBCD complex contains 2 copies each of TusB, TusC and TusD. The TusBCD complex interacts with TusE.

It localises to the cytoplasm. Part of a sulfur-relay system required for 2-thiolation of 5-methylaminomethyl-2-thiouridine (mnm(5)s(2)U) at tRNA wobble positions. Accepts sulfur from TusA and transfers it in turn to TusE. The polypeptide is Sulfurtransferase TusD (Salmonella arizonae (strain ATCC BAA-731 / CDC346-86 / RSK2980)).